We begin with the raw amino-acid sequence, 846 residues long: DNA mismatch repair protein MutS (846 aa).

ATP is bound at residue 594 to 601; sequence GPNMSGKS.

This sequence belongs to the DNA mismatch repair MutS family.

Functionally, this protein is involved in the repair of mismatches in DNA. It is possible that it carries out the mismatch recognition step. This protein has a weak ATPase activity. The protein is DNA mismatch repair protein MutS of Macrococcus caseolyticus (strain JCSC5402) (Macrococcoides caseolyticum).